A 398-amino-acid chain; its full sequence is 1-deoxy-D-xylulose 5-phosphate reductoisomerase (398 aa).

Positions 11, 12, 13, 14, 38, 39, and 125 each coordinate NADPH. Residue K126 participates in 1-deoxy-D-xylulose 5-phosphate binding. E127 contributes to the NADPH binding site. Residue D151 coordinates Mn(2+). 1-deoxy-D-xylulose 5-phosphate contacts are provided by S152, E153, S179, and H202. E153 is a Mn(2+) binding site. G208 serves as a coordination point for NADPH. 1-deoxy-D-xylulose 5-phosphate is bound by residues S215, N220, K221, and E224. A Mn(2+)-binding site is contributed by E224.

This sequence belongs to the DXR family. The cofactor is Mg(2+). It depends on Mn(2+) as a cofactor.

The catalysed reaction is 2-C-methyl-D-erythritol 4-phosphate + NADP(+) = 1-deoxy-D-xylulose 5-phosphate + NADPH + H(+). It participates in isoprenoid biosynthesis; isopentenyl diphosphate biosynthesis via DXP pathway; isopentenyl diphosphate from 1-deoxy-D-xylulose 5-phosphate: step 1/6. Functionally, catalyzes the NADPH-dependent rearrangement and reduction of 1-deoxy-D-xylulose-5-phosphate (DXP) to 2-C-methyl-D-erythritol 4-phosphate (MEP). The sequence is that of 1-deoxy-D-xylulose 5-phosphate reductoisomerase from Burkholderia multivorans (strain ATCC 17616 / 249).